Here is a 336-residue protein sequence, read N- to C-terminus: F420-dependent glucose-6-phosphate dehydrogenase (336 aa).

Coenzyme F420-(gamma-Glu)n is bound at residue D39. The Proton donor role is filled by H40. Coenzyme F420-(gamma-Glu)n-binding positions include T76 and 107-108; that span reads TG. E109 serves as the catalytic Proton acceptor. Residues N112, 177–178, and 180–181 contribute to the coenzyme F420-(gamma-Glu)n site; these read GG and LV. The substrate site is built by T195, K198, K259, and R283.

This sequence belongs to the F420-dependent glucose-6-phosphate dehydrogenase family. Homodimer.

It carries out the reaction oxidized coenzyme F420-(gamma-L-Glu)(n) + D-glucose 6-phosphate + H(+) = 6-phospho-D-glucono-1,5-lactone + reduced coenzyme F420-(gamma-L-Glu)(n). Catalyzes the coenzyme F420-dependent oxidation of glucose 6-phosphate (G6P) to 6-phosphogluconolactone. In Nocardia farcinica (strain IFM 10152), this protein is F420-dependent glucose-6-phosphate dehydrogenase.